A 301-amino-acid chain; its full sequence is Beta-1,3-galactosyltransferase 5 (301 aa).

Topologically, residues 1–7 (MAFPKMR) are cytoplasmic. The chain crosses the membrane as a helical; Signal-anchor for type II membrane protein span at residues 8-28 (LMYVCLLVLGALCLYFSMYSL). At 29–301 (NLFKEQSFVY…LLDYWQALEN (273 aa)) the chain is on the lumenal side. Residues asparagine 130, asparagine 174, and asparagine 231 are each glycosylated (N-linked (GlcNAc...) asparagine).

It belongs to the glycosyltransferase 31 family.

It localises to the golgi apparatus membrane. The catalysed reaction is a globoside Gb4Cer (d18:1(4E)) + UDP-alpha-D-galactose = a globoside GalGb4Cer (d18:1(4E)) + UDP + H(+). It participates in protein modification; protein glycosylation. Functionally, catalyzes the transfer of Gal to GlcNAc-based acceptors with a preference for the core3 O-linked glycan GlcNAc(beta1,3)GalNAc structure. Can use glycolipid LC3Cer as an efficient acceptor. In Pan paniscus (Pygmy chimpanzee), this protein is Beta-1,3-galactosyltransferase 5 (B3GALT5).